The chain runs to 147 residues: Sec-independent protein translocase protein TatB (147 aa).

A helical transmembrane segment spans residues 2–22 (FDGIGFMELLLIGVLGLVVLG). A disordered region spans residues 68-147 (ESKGLSNLSP…DTRSNPKANG (80 aa)). Residues 71-97 (GLSNLSPELQESIDQLKQAAQSVNRPY) show a composition bias toward polar residues. The span at 112-133 (PASQSVSSEASPTASSAPTSEP) shows a compositional bias: low complexity.

Belongs to the TatB family. As to quaternary structure, the Tat system comprises two distinct complexes: a TatABC complex, containing multiple copies of TatA, TatB and TatC subunits, and a separate TatA complex, containing only TatA subunits. Substrates initially bind to the TatABC complex, which probably triggers association of the separate TatA complex to form the active translocon.

It is found in the cell inner membrane. Part of the twin-arginine translocation (Tat) system that transports large folded proteins containing a characteristic twin-arginine motif in their signal peptide across membranes. Together with TatC, TatB is part of a receptor directly interacting with Tat signal peptides. TatB may form an oligomeric binding site that transiently accommodates folded Tat precursor proteins before their translocation. This chain is Sec-independent protein translocase protein TatB, found in Shewanella sp. (strain MR-4).